A 189-amino-acid polypeptide reads, in one-letter code: dCTP deaminase (189 aa).

DCTP contacts are provided by residues 112–117 (KSTYAR), 136–138 (TLE), glutamine 157, tyrosine 171, and glutamine 181. Glutamate 138 functions as the Proton donor/acceptor in the catalytic mechanism.

This sequence belongs to the dCTP deaminase family. As to quaternary structure, homotrimer.

The catalysed reaction is dCTP + H2O + H(+) = dUTP + NH4(+). It participates in pyrimidine metabolism; dUMP biosynthesis; dUMP from dCTP (dUTP route): step 1/2. Functionally, catalyzes the deamination of dCTP to dUTP. The chain is dCTP deaminase from Xanthomonas oryzae pv. oryzae (strain MAFF 311018).